A 208-amino-acid polypeptide reads, in one-letter code: MQDKLKVLLIDDHPLMRRGIKQLVELDDNFEVVADVSSGTEGISVALQTSPDVIILDLNMKGLSGLDTLKGLRAEGVDARILILTVSDAKNDIYTLIDAGADGYLLKDTEPDTLLEQIKRIAQGEVILSDSIKNLLLERTHEDNPLDSLTDREMGVLRQIATGLSNKQIAAQLFISEETVKVHIRNLLRKLNVHSRVAATVLFFEQNR.

The 117-residue stretch at 6 to 122 folds into the Response regulatory domain; that stretch reads KVLLIDDHPL…TLLEQIKRIA (117 aa). Asp57 carries the 4-aspartylphosphate modification. The HTH luxR-type domain occupies 142-207; that stretch reads EDNPLDSLTD…AATVLFFEQN (66 aa). Residues 166–185 constitute a DNA-binding region (H-T-H motif); that stretch reads NKQIAAQLFISEETVKVHIR.

In terms of biological role, could activate the expression of a formate dehydrogenase operon and could repress the transcription of the fumarate reductase (frdABCD) operon. The chain is Nitrate/nitrite response regulator protein homolog (narP) from Haemophilus influenzae (strain ATCC 51907 / DSM 11121 / KW20 / Rd).